The sequence spans 95 residues: Aspartyl/glutamyl-tRNA(Asn/Gln) amidotransferase subunit C (95 aa).

The protein belongs to the GatC family. As to quaternary structure, heterotrimer of A, B and C subunits.

It carries out the reaction L-glutamyl-tRNA(Gln) + L-glutamine + ATP + H2O = L-glutaminyl-tRNA(Gln) + L-glutamate + ADP + phosphate + H(+). It catalyses the reaction L-aspartyl-tRNA(Asn) + L-glutamine + ATP + H2O = L-asparaginyl-tRNA(Asn) + L-glutamate + ADP + phosphate + 2 H(+). Functionally, allows the formation of correctly charged Asn-tRNA(Asn) or Gln-tRNA(Gln) through the transamidation of misacylated Asp-tRNA(Asn) or Glu-tRNA(Gln) in organisms which lack either or both of asparaginyl-tRNA or glutaminyl-tRNA synthetases. The reaction takes place in the presence of glutamine and ATP through an activated phospho-Asp-tRNA(Asn) or phospho-Glu-tRNA(Gln). The polypeptide is Aspartyl/glutamyl-tRNA(Asn/Gln) amidotransferase subunit C (Ruthia magnifica subsp. Calyptogena magnifica).